A 196-amino-acid chain; its full sequence is GTP cyclohydrolase 1 (196 aa).

C85, H88, and C158 together coordinate Zn(2+).

It belongs to the GTP cyclohydrolase I family. As to quaternary structure, homomer.

The catalysed reaction is GTP + H2O = 7,8-dihydroneopterin 3'-triphosphate + formate + H(+). It participates in cofactor biosynthesis; 7,8-dihydroneopterin triphosphate biosynthesis; 7,8-dihydroneopterin triphosphate from GTP: step 1/1. In Corynebacterium aurimucosum (strain ATCC 700975 / DSM 44827 / CIP 107346 / CN-1) (Corynebacterium nigricans), this protein is GTP cyclohydrolase 1.